The following is a 335-amino-acid chain: Dihydroorotate dehydrogenase (quinone) (335 aa).

FMN is bound by residues 59-63 (AGLDK) and T83. K63 is a binding site for substrate. 108 to 112 (NRMGF) provides a ligand contact to substrate. FMN is bound by residues N136 and N169. N169 provides a ligand contact to substrate. Residue S172 is the Nucleophile of the active site. Substrate is bound at residue N174. Residues K214 and T242 each coordinate FMN. 243–244 (NT) contributes to the substrate binding site. FMN-binding positions include G265, G294, and 315–316 (YS).

The protein belongs to the dihydroorotate dehydrogenase family. Type 2 subfamily. In terms of assembly, monomer. Requires FMN as cofactor.

The protein localises to the cell membrane. The catalysed reaction is (S)-dihydroorotate + a quinone = orotate + a quinol. It participates in pyrimidine metabolism; UMP biosynthesis via de novo pathway; orotate from (S)-dihydroorotate (quinone route): step 1/1. Functionally, catalyzes the conversion of dihydroorotate to orotate with quinone as electron acceptor. This Neisseria meningitidis serogroup B (strain ATCC BAA-335 / MC58) protein is Dihydroorotate dehydrogenase (quinone).